Consider the following 377-residue polypeptide: Anhydro-N-acetylmuramic acid kinase (377 aa).

12-19 (GTSLDGID) contacts ATP.

This sequence belongs to the anhydro-N-acetylmuramic acid kinase family.

The enzyme catalyses 1,6-anhydro-N-acetyl-beta-muramate + ATP + H2O = N-acetyl-D-muramate 6-phosphate + ADP + H(+). The protein operates within amino-sugar metabolism; 1,6-anhydro-N-acetylmuramate degradation. It functions in the pathway cell wall biogenesis; peptidoglycan recycling. Functionally, catalyzes the specific phosphorylation of 1,6-anhydro-N-acetylmuramic acid (anhMurNAc) with the simultaneous cleavage of the 1,6-anhydro ring, generating MurNAc-6-P. Is required for the utilization of anhMurNAc either imported from the medium or derived from its own cell wall murein, and thus plays a role in cell wall recycling. The chain is Anhydro-N-acetylmuramic acid kinase from Methylorubrum populi (strain ATCC BAA-705 / NCIMB 13946 / BJ001) (Methylobacterium populi).